A 303-amino-acid chain; its full sequence is Protoheme IX farnesyltransferase (303 aa).

6 helical membrane-spanning segments follow: residues 25–45, 54–74, 118–138, 166–186, 230–250, and 280–300; these read MGLV…AIVM, IPQI…ACAL, CLFL…VGYV, IGWV…FLVV, LVLL…FVVI, and FVYS…VSLI.

It belongs to the UbiA prenyltransferase family. Protoheme IX farnesyltransferase subfamily. Interacts with CtaA.

The protein resides in the cell membrane. It carries out the reaction heme b + (2E,6E)-farnesyl diphosphate + H2O = Fe(II)-heme o + diphosphate. It participates in porphyrin-containing compound metabolism; heme O biosynthesis; heme O from protoheme: step 1/1. In terms of biological role, converts heme B (protoheme IX) to heme O by substitution of the vinyl group on carbon 2 of heme B porphyrin ring with a hydroxyethyl farnesyl side group. The protein is Protoheme IX farnesyltransferase of Staphylococcus epidermidis (strain ATCC 12228 / FDA PCI 1200).